Consider the following 123-residue polypeptide: Protein Wnt-3b (123 aa).

Residue S1 is the site of O-palmitoleoyl serine; by PORCN attachment. C89 and C104 are oxidised to a cystine. The N-linked (GlcNAc...) asparagine glycan is linked to N90.

It belongs to the Wnt family. In terms of processing, palmitoleoylation is required for efficient binding to frizzled receptors. Depalmitoleoylation leads to Wnt signaling pathway inhibition.

Its subcellular location is the secreted. The protein localises to the extracellular space. It is found in the extracellular matrix. In terms of biological role, ligand for members of the frizzled family of seven transmembrane receptors. Probable developmental protein. May be a signaling molecule which affects the development of discrete regions of tissues. Is likely to signal over only few cell diameters. The sequence is that of Protein Wnt-3b (WNT3B) from Meleagris gallopavo (Wild turkey).